The sequence spans 601 residues: NADH-ubiquinone oxidoreductase chain 5 (601 aa).

17 helical membrane passes run 5-25, 37-54, 83-105, 112-129, 134-156, 169-189, 209-231, 240-260, 271-291, 300-320, 323-343, 363-383, 400-420, 451-471, 478-498, 508-528, and 581-601; these read ITSLMTNFCLITTILSLTLSF, YMRNAFIISLLPLIIYID, YCLTFFSIALYITWSIMQFSLWY, TLFFKYLTMFLISMLFFL, LLQLILGWEGMGIMSFLLINWWH, IIYNRIGDTGLIIFMIWSALF, WLPLLGIVLAATGKSAQFMLHPW, TPVSALLHSSTMVVSGVFLLI, MIISIILCLGAMTTLFAALCA, IIAFSTTSQLGLMTVTIGINQ, LAFLHMSTHAFFKALLFLCSA, LILPFTSSCTLISSLALMGMP, MSYVNAWALLSTMLATALTSI, PLIRLTLGSIIFGFIISTFFL, FSIPFNSKILPTIMLILVSSL, FSHMPPLFFPSMSGYFPAIFH, and NYITIFVITILSSLLTSALYF.

The protein belongs to the complex I subunit 5 family.

The protein localises to the mitochondrion inner membrane. The catalysed reaction is a ubiquinone + NADH + 5 H(+)(in) = a ubiquinol + NAD(+) + 4 H(+)(out). Its function is as follows. Core subunit of the mitochondrial membrane respiratory chain NADH dehydrogenase (Complex I) that is believed to belong to the minimal assembly required for catalysis. Complex I functions in the transfer of electrons from NADH to the respiratory chain. The immediate electron acceptor for the enzyme is believed to be ubiquinone. This is NADH-ubiquinone oxidoreductase chain 5 (MT-ND5) from Myxine glutinosa (Atlantic hagfish).